The sequence spans 488 residues: MSQGACENQLLSKLALSDKHGEASPYFHGWKAYDNNPFHPTHNPQGVIQMGLAENQLCSDLIKEWIKENPQASICTAEGIDSFSDIAVFQDYHGLKQFRQAIATFMERARGGRVRFEAERVVMSGGATGANETIMFCLADPGDAFLVPTPYYAAFDRDLRWRTGVRIIPVECSSSNNFQITKQALESAYLKAQETGIKIKGLIISNPLGTSLDRETLESLVSFINDKQIHLVCDEIYAATVFAEPGFISVAEIIQEMYYVNRDLIHIVYSLSKDMGLPGFRVGVVYSYNDVVVSCARRMSSFGLVSSQTQSFLAAMLSDQSFVDNFLVEVSKRVAKRHHMFTEGLEEMGISCLRSNAGLFVLMDLRHMLKDQTFDSEMALWRVIINKVKINVSPGSSFHCSEPGWFRVCFANMDEDTLQIALERIKDFVVGDRANKNKNCNCICNNKRENKKRKSFQKNLKLSLSSMRYEEHVRSPKLMSPHSPLLRA.

Position 273 is an N6-(pyridoxal phosphate)lysine (lysine 273).

The protein belongs to the class-I pyridoxal-phosphate-dependent aminotransferase family. Homodimer. Expressed in young leaves and flowers. Not expressed in roots.

The sequence is that of 1-aminocyclopropane-1-carboxylate synthase-like protein 1 (ACS1) from Arabidopsis thaliana (Mouse-ear cress).